The primary structure comprises 493 residues: EGF-containing fibulin-like extracellular matrix protein 1 (493 aa).

The first 17 residues, 1 to 17, serve as a signal peptide directing secretion; it reads MLKALFLTMLTLALVKS. Residues 26 to 71 form the EGF-like 1; atypical domain; the sequence is YTQCTDGYEWDPVRQQCKDIDECDIVPDACKGGMKCVNHYGGYLCL. The 41-residue stretch at 173-213 folds into the EGF-like 2; calcium-binding domain; that stretch reads DIDECTAGTHNCRADQVCINLRGSFACQCPPGYQKRGEQCV. 15 disulfides stabilise this stretch: C177–C190, C184–C199, C201–C212, C218–C228, C224–C237, C239–C252, C258–C268, C264–C277, C279–C292, C298–C309, C305–C318, C320–C332, C338–C350, C344–C359, and C365–C377. One can recognise an EGF-like 3; calcium-binding domain in the interval 214 to 253; that stretch reads DIDECTIPPYCHQRCVNTPGSFYCQCSPGFQLAANNYTCV. A glycan (N-linked (GlcNAc...) asparagine) is linked at N249. Residues 254–293 enclose the EGF-like 4; calcium-binding domain; sequence DINECDASNQCAQQCYNILGSFICQCNQGYELSSDRLNCE. The segment at 259 to 493 is mediates interaction with TIMP3; that stretch reads DASNQCAQQC…LTIIVGPFSF (235 aa). Positions 294–333 constitute an EGF-like 5; calcium-binding domain; it reads DIDECRTSSYLCQYQCVNEPGKFSCMCPQGYQVVRSRTCQ. One can recognise an EGF-like 6; calcium-binding domain in the interval 334-378; the sequence is DINECETTNECREDEMCWNYHGGFRCYPRNPCQDPYILTPENRCV.

It belongs to the fibulin family. As to quaternary structure, interacts with ECM1. Interacts with TIMP3. In the eye, associated with photoreceptor outer and inner segment regions, the nerve fiber layer, outer nuclear layer and inner and outer plexiform layers of the retina.

It localises to the secreted. The protein localises to the extracellular space. The protein resides in the extracellular matrix. In terms of biological role, binds EGFR, the EGF receptor, inducing EGFR autophosphorylation and the activation of downstream signaling pathways. May play a role in cell adhesion and migration. May function as a negative regulator of chondrocyte differentiation. In the olfactory epithelium, it may regulate glial cell migration, differentiation and the ability of glial cells to support neuronal neurite outgrowth. The protein is EGF-containing fibulin-like extracellular matrix protein 1 (EFEMP1) of Homo sapiens (Human).